A 103-amino-acid polypeptide reads, in one-letter code: Large ribosomal subunit protein uL24 (103 aa).

It belongs to the universal ribosomal protein uL24 family. In terms of assembly, part of the 50S ribosomal subunit.

One of two assembly initiator proteins, it binds directly to the 5'-end of the 23S rRNA, where it nucleates assembly of the 50S subunit. In terms of biological role, one of the proteins that surrounds the polypeptide exit tunnel on the outside of the subunit. The sequence is that of Large ribosomal subunit protein uL24 from Endomicrobium trichonymphae.